Consider the following 245-residue polypeptide: Small ribosomal subunit protein uS2 (245 aa).

The interval 226-245 (GGGANVGEMENPPVEATADA) is disordered.

Belongs to the universal ribosomal protein uS2 family.

In Erythrobacter litoralis (strain HTCC2594), this protein is Small ribosomal subunit protein uS2.